The sequence spans 982 residues: Serine/threonine-protein kinase PknD (982 aa).

A Protein kinase domain is found at 51–342; the sequence is YQIIKSIGKG…ELIRDIENYL (292 aa). Residues 57–65 and K80 contribute to the ATP site; that span reads IGKGGMGEV. The active-site Proton acceptor is D186.

Belongs to the protein kinase superfamily. Ser/Thr protein kinase family. In terms of processing, autophosphorylated on serine and threonine residues.

The enzyme catalyses L-seryl-[protein] + ATP = O-phospho-L-seryl-[protein] + ADP + H(+). It catalyses the reaction L-threonyl-[protein] + ATP = O-phospho-L-threonyl-[protein] + ADP + H(+). Together with the serine/threonine kinase Pkn1, may play a role in the specific interactions with host proteins during intracellular growth. This is Serine/threonine-protein kinase PknD from Protochlamydia amoebophila (strain UWE25).